The sequence spans 521 residues: Apolipoprotein N-acyltransferase (521 aa).

A run of 6 helical transmembrane segments spans residues 27 to 47 (VLLA…IAFA), 64 to 84 (LGFV…TIVV), 93 to 113 (IVSV…PAVV), 125 to 145 (ISLL…RAFL), 167 to 187 (IADI…NVVL), and 202 to 222 (YPVK…AYGF). The CN hydrolase domain occupies 239–483 (IQGNIDQNIK…EAVLNGEVRL (245 aa)). Glutamate 281 functions as the Proton acceptor in the catalytic mechanism. Lysine 344 is a catalytic residue. Residue cysteine 394 is the Nucleophile of the active site. A helical membrane pass occupies residues 493–513 (YGDVFAWACVAGAAVVAALAF).

It belongs to the CN hydrolase family. Apolipoprotein N-acyltransferase subfamily.

The protein resides in the cell inner membrane. The enzyme catalyses N-terminal S-1,2-diacyl-sn-glyceryl-L-cysteinyl-[lipoprotein] + a glycerophospholipid = N-acyl-S-1,2-diacyl-sn-glyceryl-L-cysteinyl-[lipoprotein] + a 2-acyl-sn-glycero-3-phospholipid + H(+). The protein operates within protein modification; lipoprotein biosynthesis (N-acyl transfer). Its function is as follows. Catalyzes the phospholipid dependent N-acylation of the N-terminal cysteine of apolipoprotein, the last step in lipoprotein maturation. This is Apolipoprotein N-acyltransferase from Geobacter metallireducens (strain ATCC 53774 / DSM 7210 / GS-15).